The sequence spans 504 residues: Amphoterin-induced protein 3 (504 aa).

The signal sequence occupies residues 1–19; the sequence is MTWLVLLGTLLCMLRVGLG. The Extracellular segment spans residues 20-383; that stretch reads TPDSEGFPPR…PRPEPEAFNT (364 aa). The 37-residue stretch at 25 to 61 folds into the LRRNT domain; the sequence is GFPPRALHNCPYKCICAADLLSCTGLGLQDVPAELPA. Disulfide bonds link cysteine 34/cysteine 40 and cysteine 38/cysteine 47. 6 LRR repeats span residues 62–83, 86–107, 110–133, 134–155, 158–178, and 184–207; these read ATADLDLSHNALQRLRPGWLAP, QLRALHLDHNELDALGRGVFVN, GLRLLDLSSNTLRALGRHDLDGLG, ALEKLLLFNNRLVHLDEHAFHG, ALSHLYLGCNELASFSFDHLH, and HLLTLDLSSNRLGHISVPELAALP. Residue asparagine 107 is glycosylated (N-linked (GlcNAc...) asparagine). The region spanning 219-275 is the LRRCT domain; that stretch reads NPLPCDCRLYHLLQRWHQRGLSAVRDFAREYVCLAFKVPASRVRFFQHSRVFENCSS. 3 cysteine pairs are disulfide-bonded: cysteine 223–cysteine 251, cysteine 225–cysteine 273, and cysteine 300–cysteine 352. N-linked (GlcNAc...) asparagine glycosylation is found at asparagine 272, asparagine 301, asparagine 362, and asparagine 368. One can recognise an Ig-like C2-type domain in the interval 277–370; that stretch reads PALGLERPEE…HNQTHEYNVS (94 aa). The helical transmembrane segment at 384 to 404 threads the bilayer; the sequence is GFTTLLGCAVGLVLVLLYLFA. Topologically, residues 405–504 are cytoplasmic; sequence PPCRCCRRAC…SIGSEGPMTT (100 aa). Residues 422–448 form a disordered region; that stretch reads TPSPLQELSAQSSVLSTTPPDAPSRKA. Polar residues predominate over residues 424–440; the sequence is SPLQELSAQSSVLSTTP.

This sequence belongs to the immunoglobulin superfamily. AMIGO family. In terms of assembly, binds AMIGO1 or AMIGO2.

It is found in the membrane. Its function is as follows. May mediate heterophilic cell-cell interaction. May contribute to signal transduction through its intracellular domain. This Homo sapiens (Human) protein is Amphoterin-induced protein 3.